The primary structure comprises 311 residues: Acetyl-coenzyme A carboxylase carboxyl transferase subunit alpha (311 aa).

The CoA carboxyltransferase C-terminal domain maps to 36–286 (NLSKEISKVY…ANYFISELAE (251 aa)).

It belongs to the AccA family. Acetyl-CoA carboxylase is a heterohexamer composed of biotin carboxyl carrier protein (AccB), biotin carboxylase (AccC) and two subunits each of ACCase subunit alpha (AccA) and ACCase subunit beta (AccD).

The protein localises to the cytoplasm. It catalyses the reaction N(6)-carboxybiotinyl-L-lysyl-[protein] + acetyl-CoA = N(6)-biotinyl-L-lysyl-[protein] + malonyl-CoA. It functions in the pathway lipid metabolism; malonyl-CoA biosynthesis; malonyl-CoA from acetyl-CoA: step 1/1. Component of the acetyl coenzyme A carboxylase (ACC) complex. First, biotin carboxylase catalyzes the carboxylation of biotin on its carrier protein (BCCP) and then the CO(2) group is transferred by the carboxyltransferase to acetyl-CoA to form malonyl-CoA. The protein is Acetyl-coenzyme A carboxylase carboxyl transferase subunit alpha of Campylobacter concisus (strain 13826).